The following is a 227-amino-acid chain: ATP-dependent dethiobiotin synthetase BioD (227 aa).

13–18 (DIGKTY) serves as a coordination point for ATP. Thr-17 contributes to the Mg(2+) binding site. Lys-38 is a catalytic residue. A substrate-binding site is contributed by Ser-42. ATP is bound by residues Asp-55, 116 to 119 (EGSG), and 179 to 180 (NN). 2 residues coordinate Mg(2+): Asp-55 and Glu-116.

Belongs to the dethiobiotin synthetase family. Homodimer. The cofactor is Mg(2+).

Its subcellular location is the cytoplasm. It catalyses the reaction (7R,8S)-7,8-diammoniononanoate + CO2 + ATP = (4R,5S)-dethiobiotin + ADP + phosphate + 3 H(+). The protein operates within cofactor biosynthesis; biotin biosynthesis; biotin from 7,8-diaminononanoate: step 1/2. In terms of biological role, catalyzes a mechanistically unusual reaction, the ATP-dependent insertion of CO2 between the N7 and N8 nitrogen atoms of 7,8-diaminopelargonic acid (DAPA, also called 7,8-diammoniononanoate) to form a ureido ring. The protein is ATP-dependent dethiobiotin synthetase BioD of Clostridium botulinum (strain Eklund 17B / Type B).